A 213-amino-acid polypeptide reads, in one-letter code: MEQGEKQVMEQATYDEPEREQPIEEEAAPQPEEESGGVPLEEAGGEEAAEPAEKAPTAEELAAAKAQIAELEAKLSEMEHRYLRLYADFENFRRRTRQEMEAAEKYRAQSLASDLLPVLDNFERALKIETDNEQAKSILQGMEMVYRSLVDALKKEGVEAIEAVGKPFDPYLHQAVMQAEAEGYEPNTVVEELQKGYKLKDRVLRPAMVKVSQ.

Residues 1–61 (MEQGEKQVME…AEKAPTAEEL (61 aa)) form a disordered region. Positions 13 to 35 (TYDEPEREQPIEEEAAPQPEEES) are enriched in acidic residues.

This sequence belongs to the GrpE family. Homodimer.

Its subcellular location is the cytoplasm. Functionally, participates actively in the response to hyperosmotic and heat shock by preventing the aggregation of stress-denatured proteins, in association with DnaK and GrpE. It is the nucleotide exchange factor for DnaK and may function as a thermosensor. Unfolded proteins bind initially to DnaJ; upon interaction with the DnaJ-bound protein, DnaK hydrolyzes its bound ATP, resulting in the formation of a stable complex. GrpE releases ADP from DnaK; ATP binding to DnaK triggers the release of the substrate protein, thus completing the reaction cycle. Several rounds of ATP-dependent interactions between DnaJ, DnaK and GrpE are required for fully efficient folding. In Geobacillus kaustophilus (strain HTA426), this protein is Protein GrpE.